Consider the following 265-residue polypeptide: Mycothiol acetyltransferase (265 aa).

N-acetyltransferase domains follow at residues 1–110 (MDDL…PPLP) and 118–265 (VSVR…YVRG). Asp3 is a 1D-myo-inositol 2-(L-cysteinylamino)-2-deoxy-alpha-D-glucopyranoside binding site. 44-46 (VQV) contacts acetyl-CoA. 1D-myo-inositol 2-(L-cysteinylamino)-2-deoxy-alpha-D-glucopyranoside is bound by residues Glu145, Arg185, and Glu198. Residues 202–204 (LGV) and 209–215 (HCKGLGK) each bind acetyl-CoA. 1D-myo-inositol 2-(L-cysteinylamino)-2-deoxy-alpha-D-glucopyranoside is bound at residue Tyr236.

The protein belongs to the acetyltransferase family. MshD subfamily. As to quaternary structure, monomer.

The enzyme catalyses 1D-myo-inositol 2-(L-cysteinylamino)-2-deoxy-alpha-D-glucopyranoside + acetyl-CoA = mycothiol + CoA + H(+). Catalyzes the transfer of acetyl from acetyl-CoA to desacetylmycothiol (Cys-GlcN-Ins) to form mycothiol. The sequence is that of Mycothiol acetyltransferase from Segniliparus rotundus (strain ATCC BAA-972 / CDC 1076 / CIP 108378 / DSM 44985 / JCM 13578).